Here is a 573-residue protein sequence, read N- to C-terminus: Urease subunit alpha 1 (573 aa).

The region spanning 136–573 is the Urease domain; it reads GGIDTHVHFI…LPLAQRYFLF (438 aa). Residues histidine 141, histidine 143, and lysine 224 each coordinate Ni(2+). Lysine 224 is modified (N6-carboxylysine). Histidine 226 contributes to the substrate binding site. Ni(2+) is bound by residues histidine 253 and histidine 279. The active-site Proton donor is histidine 327. Position 367 (aspartate 367) interacts with Ni(2+).

The protein belongs to the metallo-dependent hydrolases superfamily. Urease alpha subunit family. May form a heterohexamer of 3 UreC (alpha) and 3 UreAB (gamma/beta) subunits. May also form a heterotrimer of UreA (gamma), UreB (beta) and UreC (alpha) subunits. Three heterotrimers associate to form the active enzyme. It depends on Ni cation as a cofactor. Post-translationally, carboxylation allows a single lysine to coordinate two nickel ions.

It localises to the cytoplasm. It carries out the reaction urea + 2 H2O + H(+) = hydrogencarbonate + 2 NH4(+). Its pathway is nitrogen metabolism; urea degradation; CO(2) and NH(3) from urea (urease route): step 1/1. The polypeptide is Urease subunit alpha 1 (Streptomyces coelicolor (strain ATCC BAA-471 / A3(2) / M145)).